The following is a 296-amino-acid chain: Lipoyl synthase (296 aa).

[4Fe-4S] cluster is bound by residues C37, C42, C48, C63, C67, C70, and S276. One can recognise a Radical SAM core domain in the interval 49 to 265 (WSKKHTTVMI…ERLAKTKGFL (217 aa)).

This sequence belongs to the radical SAM superfamily. Lipoyl synthase family. The cofactor is [4Fe-4S] cluster.

It is found in the cytoplasm. The enzyme catalyses [[Fe-S] cluster scaffold protein carrying a second [4Fe-4S](2+) cluster] + N(6)-octanoyl-L-lysyl-[protein] + 2 oxidized [2Fe-2S]-[ferredoxin] + 2 S-adenosyl-L-methionine + 4 H(+) = [[Fe-S] cluster scaffold protein] + N(6)-[(R)-dihydrolipoyl]-L-lysyl-[protein] + 4 Fe(3+) + 2 hydrogen sulfide + 2 5'-deoxyadenosine + 2 L-methionine + 2 reduced [2Fe-2S]-[ferredoxin]. It functions in the pathway protein modification; protein lipoylation via endogenous pathway; protein N(6)-(lipoyl)lysine from octanoyl-[acyl-carrier-protein]: step 2/2. Catalyzes the radical-mediated insertion of two sulfur atoms into the C-6 and C-8 positions of the octanoyl moiety bound to the lipoyl domains of lipoate-dependent enzymes, thereby converting the octanoylated domains into lipoylated derivatives. This chain is Lipoyl synthase, found in Rickettsia rickettsii (strain Iowa).